Consider the following 1222-residue polypeptide: ATP-dependent helicase/nuclease subunit A (1222 aa).

The UvrD-like helicase ATP-binding domain maps to 39–495 (QKRTAQQIEA…ILLKENFRSQ (457 aa)). 60–67 (ASAGSGKT) is an ATP binding site. Residues 524-810 (QLIAGSHAQT…NLMTIHKSKG (287 aa)) enclose the UvrD-like helicase C-terminal domain.

The protein belongs to the helicase family. AddA subfamily. Heterodimer of AddA and AddB/RexB. Mg(2+) is required as a cofactor.

It catalyses the reaction Couples ATP hydrolysis with the unwinding of duplex DNA by translocating in the 3'-5' direction.. The catalysed reaction is ATP + H2O = ADP + phosphate + H(+). Its function is as follows. The heterodimer acts as both an ATP-dependent DNA helicase and an ATP-dependent, dual-direction single-stranded exonuclease. Recognizes the chi site generating a DNA molecule suitable for the initiation of homologous recombination. The AddA nuclease domain is required for chi fragment generation; this subunit has the helicase and 3' -&gt; 5' nuclease activities. In Streptococcus pyogenes serotype M4 (strain MGAS10750), this protein is ATP-dependent helicase/nuclease subunit A.